Reading from the N-terminus, the 174-residue chain is UBX domain-containing protein 5 (174 aa).

Residues 8–58 are a coiled coil; it reads QKEKFAEDRALLSQQNKEYAESLAKDIAKKEEKDKIRFEAEQKELRKKTIQ. Residues 74-120 enclose the UBX domain; that stretch reads RLLVRYPNGSRLILSFSPSQPMTSLFDAIILNPACPDYFSVRSVYPR.

Forms a complex composed of deubiquitinating enzyme atx-3, adapter ubxn-5 and cdc-48.1. Interacts with atx-3 (via C-terminus). Interacts with cdc-48.1 (via N-terminus) and cdc-48.2. In terms of tissue distribution, specifically expressed in the germline.

Functionally, probably acts as an adapter for ATPase cdc-48.1 and/or cdc-48.2, conferring substrate specificity. Unlike other UBX domain-containing protein does not bind 'Lys-48'-polyubiquitinated chain. In Caenorhabditis elegans, this protein is UBX domain-containing protein 5.